Here is a 330-residue protein sequence, read N- to C-terminus: Phosphate acyltransferase (330 aa).

Belongs to the PlsX family. Homodimer. Probably interacts with PlsY.

Its subcellular location is the cytoplasm. It catalyses the reaction a fatty acyl-[ACP] + phosphate = an acyl phosphate + holo-[ACP]. It participates in lipid metabolism; phospholipid metabolism. In terms of biological role, catalyzes the reversible formation of acyl-phosphate (acyl-PO(4)) from acyl-[acyl-carrier-protein] (acyl-ACP). This enzyme utilizes acyl-ACP as fatty acyl donor, but not acyl-CoA. The chain is Phosphate acyltransferase from Lactobacillus delbrueckii subsp. bulgaricus (strain ATCC BAA-365 / Lb-18).